We begin with the raw amino-acid sequence, 454 residues long: Glutamyl-tRNA reductase (454 aa).

Substrate-binding positions include 50 to 53, serine 103, 108 to 110, and glutamine 114; these read TCNR and EDQ. Cysteine 51 serves as the catalytic Nucleophile. Residue 182–187 participates in NADP(+) binding; sequence GAGEMG. Positions 407-454 are disordered; it reads LFDPNFGGDTPQPDRPDDIPRAAERGDISGDDLPDDVPNHIAEKVSDG. Composition is skewed to basic and acidic residues over residues 418–434 and 443–454; these read QPDR…RGDI and VPNHIAEKVSDG.

The protein belongs to the glutamyl-tRNA reductase family. Homodimer.

It carries out the reaction (S)-4-amino-5-oxopentanoate + tRNA(Glu) + NADP(+) = L-glutamyl-tRNA(Glu) + NADPH + H(+). The protein operates within porphyrin-containing compound metabolism; protoporphyrin-IX biosynthesis; 5-aminolevulinate from L-glutamyl-tRNA(Glu): step 1/2. In terms of biological role, catalyzes the NADPH-dependent reduction of glutamyl-tRNA(Glu) to glutamate 1-semialdehyde (GSA). This chain is Glutamyl-tRNA reductase, found in Haloquadratum walsbyi (strain DSM 16790 / HBSQ001).